The primary structure comprises 377 residues: Cell division protein FtsZ (377 aa).

The segment covering 1–16 (MDSIVDDAIDEAEDMG) has biased composition (acidic residues). The interval 1–33 (MDSIVDDAIDEAEDMGDGSAEVGGPTDINRSGT) is disordered. GTP is bound by residues 57–61 (GAGGN), 144–146 (GTG), E175, R179, and D222.

The protein belongs to the FtsZ family. Homodimer. Polymerizes to form a dynamic ring structure in a strictly GTP-dependent manner. Interacts directly with several other division proteins.

The protein localises to the cytoplasm. Its function is as follows. Essential cell division protein that forms a contractile ring structure (Z ring) at the future cell division site. The regulation of the ring assembly controls the timing and the location of cell division. One of the functions of the FtsZ ring is to recruit other cell division proteins to the septum to produce a new cell wall between the dividing cells. Binds GTP and shows GTPase activity. The polypeptide is Cell division protein FtsZ (Haloferax mediterranei (strain ATCC 33500 / DSM 1411 / JCM 8866 / NBRC 14739 / NCIMB 2177 / R-4) (Halobacterium mediterranei)).